Consider the following 320-residue polypeptide: Cytochrome f (320 aa).

The first 35 residues, 1-35 (MQTRNNFSWIKEQITRSISVSLMIYIITRASISNA), serve as a signal peptide directing secretion. 4 residues coordinate heme: Tyr-36, Cys-56, Cys-59, and His-60. A helical transmembrane segment spans residues 286-306 (VQGLLFFLASVILAQIFLVLK).

It belongs to the cytochrome f family. The 4 large subunits of the cytochrome b6-f complex are cytochrome b6, subunit IV (17 kDa polypeptide, petD), cytochrome f and the Rieske protein, while the 4 small subunits are PetG, PetL, PetM and PetN. The complex functions as a dimer. The cofactor is heme.

The protein resides in the plastid. It localises to the chloroplast thylakoid membrane. Component of the cytochrome b6-f complex, which mediates electron transfer between photosystem II (PSII) and photosystem I (PSI), cyclic electron flow around PSI, and state transitions. This Lactuca sativa (Garden lettuce) protein is Cytochrome f.